Consider the following 179-residue polypeptide: Inner membrane-spanning protein YciB (179 aa).

The next 5 helical transmembrane spans lie at 22 to 42, 50 to 70, 76 to 96, 121 to 141, and 149 to 169; these read IYVASGALIVATALALVFTWF, MTLITFLMVLVFGTLTLVFHN, WKVTIIYTLFALALLISQLVL, LAWAVFFLVCGLANIYVAFWL, and FKVFGLTALTLVFTLLSGVYI.

Belongs to the YciB family.

The protein resides in the cell inner membrane. Functionally, plays a role in cell envelope biogenesis, maintenance of cell envelope integrity and membrane homeostasis. The sequence is that of Inner membrane-spanning protein YciB from Serratia proteamaculans (strain 568).